The chain runs to 286 residues: DegV domain-containing protein SPs1668 (286 aa).

A DegV domain is found at 3 to 282 (FTIMTDSTAD…PNTLAVFVIG (280 aa)). Hexadecanoate contacts are provided by Thr62 and Ser94.

Its function is as follows. May bind long-chain fatty acids, such as palmitate, and may play a role in lipid transport or fatty acid metabolism. The polypeptide is DegV domain-containing protein SPs1668 (Streptococcus pyogenes serotype M3 (strain SSI-1)).